The primary structure comprises 187 residues: Troponin I, slow skeletal muscle (187 aa).

Proline 2 carries the N-acetylproline modification. An involved in binding TNC region spans residues 2-48; it reads PEVERKSKITASRKLMLKSLMLAKAKECWEQEHEEREAEKVRYLSER. Residue serine 58 is modified to Phosphoserine. An involved in binding TNC and actin region spans residues 97 to 118; sequence LKLKVLDLRGKFKRPPLRRVRV.

It belongs to the troponin I family. As to quaternary structure, binds to actin and tropomyosin.

Troponin I is the inhibitory subunit of troponin, the thin filament regulatory complex which confers calcium-sensitivity to striated muscle actomyosin ATPase activity. This Mus musculus (Mouse) protein is Troponin I, slow skeletal muscle (Tnni1).